Here is a 490-residue protein sequence, read N- to C-terminus: 5-hydroxytryptamine receptor 3A (490 aa).

A signal peptide spans 1–19 (MVLWLQLALLALLLPTSLA). Over 20 to 249 (QGEVRGKGTA…FYVVIRRRPL (230 aa)) the chain is Extracellular. 4 N-linked (GlcNAc...) asparagine glycosylation sites follow: N33, N109, N175, and N191. A disulfide bridge links C162 with C176. A helical transmembrane segment spans residues 250-270 (FYAVTLLLPSIFLMIVDIVGF). Residues 271-285 (YLPPDSGERVSFKIT) lie on the Cytoplasmic side of the membrane. Residues 286–306 (LLLGYSVFLIIVSDTLPATAI) traverse the membrane as a helical segment. The Extracellular segment spans residues 307-312 (GTPLIS). The helical transmembrane segment at 313–333 (VYFVVCMALLVISLAETILIV) threads the bilayer. Residues 334–467 (RLVHKQDLQQ…GSVLDKLLFR (134 aa)) lie on the Cytoplasmic side of the membrane. Residues 401–422 (GGPQDLEKTSRGRGSPPPPPRE) are disordered. The HA-stretch; determines single-channel conductance in 5-HT3 receptors stretch occupies residues 426 to 462 (AMCGLLQELASIRHFLEKREETREVARDWLRVGSVLD). A helical membrane pass occupies residues 468-488 (VYLLAVLAYSITLVTLWSVWH). Over 489-490 (YA) the chain is Extracellular.

The protein belongs to the ligand-gated ion channel (TC 1.A.9) family. 5-hydroxytryptamine receptor (TC 1.A.9.2) subfamily. HTR3A sub-subfamily. In terms of assembly, forms homopentameric as well as heteropentameric serotonin-activated cation-selective channel complexes with HTR3B or HTR3C or HTR3D or HTR3E. The homomeric complex is functional but exhibits low conductance with modified voltage dependence, and decreased agonist and antagonist affinity. Heteropentameric complexes display properties which resemble that of neuronal serotonin-activated channels in vivo. Interacts with RIC3. In terms of tissue distribution, expressed in cortex, intestine and liver. Not expressed in muscle or spleen.

The protein localises to the postsynaptic cell membrane. The protein resides in the cell membrane. The enzyme catalyses Na(+)(in) = Na(+)(out). It catalyses the reaction K(+)(in) = K(+)(out). The catalysed reaction is Ca(2+)(in) = Ca(2+)(out). It carries out the reaction Mg(2+)(in) = Mg(2+)(out). Functionally, forms serotonin (5-hydroxytryptamine/5-HT3)-activated cation-selective channel complexes, which when activated cause fast, depolarizing responses in neurons. The sequence is that of 5-hydroxytryptamine receptor 3A from Cavia porcellus (Guinea pig).